The following is a 115-amino-acid chain: Large ribosomal subunit protein uL24 (115 aa).

This sequence belongs to the universal ribosomal protein uL24 family. In terms of assembly, part of the 50S ribosomal subunit.

Its function is as follows. One of two assembly initiator proteins, it binds directly to the 5'-end of the 23S rRNA, where it nucleates assembly of the 50S subunit. One of the proteins that surrounds the polypeptide exit tunnel on the outside of the subunit. The protein is Large ribosomal subunit protein uL24 of Aster yellows witches'-broom phytoplasma (strain AYWB).